Here is a 570-residue protein sequence, read N- to C-terminus: MQTSNFRKKNAAEVDFFMGYGDVNRYEVLEVIGKGSYGLVCSANDIHTGEKVAIKKIHNIFEHISDAARILREIKLLRLLRHPDIVEIKHIMLPPSKMDFRDIYVVFELMESDLHQVIKANDDLTREHYQFFLYQMLRALKYIHTANVYHRDLKPKNILANANCKLKICDFGLARVAFTDAPTTVFWTDYVATRWYRAPELCGSFYSKYTPAIDIWSIGCIFAEVLIGKPLFPGKNVVHQLDLITDLLGTPSLDAISQVRNDKARKYLTCMRKKQPASFSHKFLKADPLALQLLRKLLAFDPKDRPSAQEALADPYFNGLAKVEREPSCQPIPKMEFEFERRRATKEDIKELIFQEILEYHPQLLKEHISGTERPNFHHLSVVDQFRKQFTQVEENLNGSGAAVSLQRKHSSLPRSTIVHSAAIPAKDYKHVASSSTKLAVDGSWNAQIQGVHANIAGEPSTIVRPAVSSERSLAPTLQWQPNMTHFLNHALCYQNTVFSGSLLDATGPAQAIPRTTPYVDYRSGNLDLYQHHVSREDVQSDTATAQAHAASHGPVPAVSYSLPGTYRIT.

The 292-residue stretch at 26–317 folds into the Protein kinase domain; that stretch reads YEVLEVIGKG…AQEALADPYF (292 aa). ATP contacts are provided by residues 32-40 and K55; that span reads IGKGSYGLV. The active-site Proton acceptor is D152. T188 is subject to Phosphothreonine. The short motif at 188-190 is the TXY element; that stretch reads TDY. Y190 is subject to Phosphotyrosine.

This sequence belongs to the protein kinase superfamily. CMGC Ser/Thr protein kinase family. MAP kinase subfamily. Post-translationally, dually phosphorylated on Thr-188 and Tyr-190, which activates the enzyme.

It carries out the reaction L-seryl-[protein] + ATP = O-phospho-L-seryl-[protein] + ADP + H(+). It catalyses the reaction L-threonyl-[protein] + ATP = O-phospho-L-threonyl-[protein] + ADP + H(+). Its activity is regulated as follows. Activated by threonine and tyrosine phosphorylation. The sequence is that of Mitogen-activated protein kinase 11 (MPK11) from Oryza sativa subsp. japonica (Rice).